The following is a 238-amino-acid chain: Probable transcriptional regulatory protein YeeN (238 aa).

Belongs to the TACO1 family. YeeN subfamily.

Its subcellular location is the cytoplasm. This is Probable transcriptional regulatory protein YeeN from Escherichia coli (strain UTI89 / UPEC).